A 377-amino-acid chain; its full sequence is Histone deacetylase 8 (377 aa).

The histone deacetylase stretch occupies residues 14–324; it reads LPPVYIYSPE…WTYLTGVILG (311 aa). At serine 39 the chain carries Phosphoserine. Substrate is bound at residue aspartate 101. Residue histidine 143 is the Proton acceptor of the active site. Position 151 (glycine 151) interacts with substrate. Residues aspartate 178, histidine 180, and aspartate 267 each coordinate a divalent metal cation. Residue tyrosine 306 participates in substrate binding.

It belongs to the histone deacetylase family. HD type 1 subfamily. Interacts with CBFA2T3. Interacts with phosphorylated SMG5/EST1B; this interaction protects SMG5 from ubiquitin-mediated degradation. Associates with alpha-SMA (smooth muscle alpha-actin). It depends on a divalent metal cation as a cofactor. Phosphorylated by PKA on serine 39. Phosphorylation reduces deacetylase activity observed preferentially on histones H3 and H4.

The protein localises to the nucleus. It localises to the chromosome. Its subcellular location is the cytoplasm. The catalysed reaction is N(6)-acetyl-L-lysyl-[histone] + H2O = L-lysyl-[histone] + acetate. The enzyme catalyses N(6)-acetyl-L-lysyl-[protein] + H2O = L-lysyl-[protein] + acetate. It catalyses the reaction N(6)-(2E)-butenoyl-L-lysyl-[protein] + H2O = (2E)-2-butenoate + L-lysyl-[protein]. With respect to regulation, its activity is inhibited by trichostatin A (TSA) and butyrate, 2 well known histone deacetylase inhibitors. Its function is as follows. Histone deacetylase that catalyzes the deacetylation of lysine residues on the N-terminal part of the core histones (H2A, H2B, H3 and H4). Histone deacetylation gives a tag for epigenetic repression and plays an important role in transcriptional regulation, cell cycle progression and developmental events. Histone deacetylases act via the formation of large multiprotein complexes. Also involved in the deacetylation of cohesin complex protein SMC3 regulating release of cohesin complexes from chromatin. May play a role in smooth muscle cell contractility. In addition to protein deacetylase activity, also has protein-lysine deacylase activity: acts as a protein decrotonylase by mediating decrotonylation ((2E)-butenoyl) of histones. The sequence is that of Histone deacetylase 8 (HDAC8) from Bos taurus (Bovine).